A 232-amino-acid chain; its full sequence is Phosphatidylserine decarboxylase proenzyme (232 aa).

S190 (schiff-base intermediate with substrate; via pyruvic acid) is an active-site residue. A Pyruvic acid (Ser); by autocatalysis modification is found at S190.

This sequence belongs to the phosphatidylserine decarboxylase family. PSD-A subfamily. In terms of assembly, heterodimer of a large membrane-associated beta subunit and a small pyruvoyl-containing alpha subunit. Pyruvate serves as cofactor. In terms of processing, is synthesized initially as an inactive proenzyme. Formation of the active enzyme involves a self-maturation process in which the active site pyruvoyl group is generated from an internal serine residue via an autocatalytic post-translational modification. Two non-identical subunits are generated from the proenzyme in this reaction, and the pyruvate is formed at the N-terminus of the alpha chain, which is derived from the carboxyl end of the proenzyme. The post-translation cleavage follows an unusual pathway, termed non-hydrolytic serinolysis, in which the side chain hydroxyl group of the serine supplies its oxygen atom to form the C-terminus of the beta chain, while the remainder of the serine residue undergoes an oxidative deamination to produce ammonia and the pyruvoyl prosthetic group on the alpha chain.

It localises to the cell membrane. It carries out the reaction a 1,2-diacyl-sn-glycero-3-phospho-L-serine + H(+) = a 1,2-diacyl-sn-glycero-3-phosphoethanolamine + CO2. It participates in phospholipid metabolism; phosphatidylethanolamine biosynthesis; phosphatidylethanolamine from CDP-diacylglycerol: step 2/2. Functionally, catalyzes the formation of phosphatidylethanolamine (PtdEtn) from phosphatidylserine (PtdSer). The sequence is that of Phosphatidylserine decarboxylase proenzyme from Bartonella bacilliformis (strain ATCC 35685 / KC583 / Herrer 020/F12,63).